The following is a 115-amino-acid chain: Large ribosomal subunit protein uL22 (115 aa).

It belongs to the universal ribosomal protein uL22 family. Part of the 50S ribosomal subunit.

In terms of biological role, this protein binds specifically to 23S rRNA; its binding is stimulated by other ribosomal proteins, e.g. L4, L17, and L20. It is important during the early stages of 50S assembly. It makes multiple contacts with different domains of the 23S rRNA in the assembled 50S subunit and ribosome. Its function is as follows. The globular domain of the protein is located near the polypeptide exit tunnel on the outside of the subunit, while an extended beta-hairpin is found that lines the wall of the exit tunnel in the center of the 70S ribosome. This Wolbachia pipientis wMel protein is Large ribosomal subunit protein uL22 (rplV).